A 959-amino-acid polypeptide reads, in one-letter code: Protein moonraker (959 aa).

The disordered stretch occupies residues L124 to V156. A compositionally biased stretch (basic and acidic residues) spans T134–D145. S279 carries the post-translational modification Phosphoserine. Residues E456–D470 are compositionally biased toward basic and acidic residues. Disordered regions lie at residues E456–K560 and R572–S610. The span at P515 to L533 shows a compositional bias: polar residues. The segment covering W547–S558 has biased composition (pro residues). The stretch at Q582–A674 forms a coiled coil. The span at E583–A599 shows a compositional bias: basic and acidic residues. Position 691 is a phosphoserine (S691). Disordered stretches follow at residues S692 to P721 and L848 to V883. A compositionally biased stretch (low complexity) spans A707 to A717. Residues G857–Q874 show a composition bias toward basic and acidic residues. The tract at residues G877–A959 is necessary and sufficient for CEP20-binding.

As to quaternary structure, interacts with CEP63 and WDR62. Forms a complex with OFD1 and CEP20/FOR20. Interacts with PCM1.

It is found in the cytoplasm. The protein localises to the cytoskeleton. Its subcellular location is the microtubule organizing center. The protein resides in the centrosome. It localises to the centriolar satellite. Involved in centriole duplication. Positively regulates CEP63 centrosomal localization. Required for WDR62 centrosomal localization and promotes the centrosomal localization of CDK2. May play a role in cilium assembly. In Mus musculus (Mouse), this protein is Protein moonraker (Kiaa0753).